The following is an 87-amino-acid chain: UPF0250 protein NT01EI_2946 (87 aa).

The protein belongs to the UPF0250 family.

The polypeptide is UPF0250 protein NT01EI_2946 (Edwardsiella ictaluri (strain 93-146)).